We begin with the raw amino-acid sequence, 472 residues long: MKIYRVAKASEYLVITGILIKDIKLAKKAWILPGQSCSVLDLSPVNYTFEVQAMSAEKLPFVLPAVFTIGPRVDDKESLLKYAKLISPHARHSNHVNELVQGIIEGETRVLAASMTMEEVFRGTKQFKQEVFDKVQLELNQFGLLIYNANVKQLVDVRGHEYFSYLGQKTQMEAKNQARVDVAEAKMKGEIGSKLREGQTLQNAAKIDAETKVIAMQRAGEGEKEGIKVRTEVKVFENQREAEVAQANSELAKKKAAWTKAAQVAEVEAKKAVKLREAELQGEVERMNALTTTEKLKAEFLSKASVQYETKVQEANWELYKKQKEAEAILYEKKAEAEAQKASADATFYASKQAAEAELYAKKKEAEGIVTVGQAQGVYVSKLLNALGNDYTAVRDYLMINGGMFQEIAKINAEAIRGLEPKISIWTNGGEAGGMKEVAGVYKMLPPLFKTVHEQTGMLPPAWMGVLPDKNS.

A lipid anchor (S-palmitoyl cysteine) is attached at cysteine 37. Residues 237-327 are a coiled coil; it reads ENQREAEVAQ…ELYKKQKEAE (91 aa).

This sequence belongs to the band 7/mec-2 family. Flotillin subfamily. In terms of processing, may be palmitoylated. Very low occasional expression in roots and nodules.

It is found in the cell membrane. It localises to the membrane. Its subcellular location is the caveola. Functionally, may act as a scaffolding protein within caveolar membranes, functionally participating in formation of caveolae or caveolae-like vesicles. May be involved in nodule formation. In Medicago truncatula (Barrel medic), this protein is Flotillin-like protein 6 (FLOT6).